The chain runs to 37 residues: Cytochrome b6-f complex subunit 5 (37 aa).

The chain crosses the membrane as a helical span at residues 5-25; sequence LLSGIVLGLIPITLAGLFVTA.

It belongs to the PetG family. As to quaternary structure, the 4 large subunits of the cytochrome b6-f complex are cytochrome b6, subunit IV (17 kDa polypeptide, PetD), cytochrome f and the Rieske protein, while the 4 small subunits are PetG, PetL, PetM and PetN. The complex functions as a dimer.

Its subcellular location is the plastid. It is found in the chloroplast thylakoid membrane. Component of the cytochrome b6-f complex, which mediates electron transfer between photosystem II (PSII) and photosystem I (PSI), cyclic electron flow around PSI, and state transitions. PetG is required for either the stability or assembly of the cytochrome b6-f complex. This Angiopteris evecta (Mule's foot fern) protein is Cytochrome b6-f complex subunit 5.